The following is a 557-amino-acid chain: 2-succinyl-5-enolpyruvyl-6-hydroxy-3-cyclohexene-1-carboxylate synthase (557 aa).

Belongs to the TPP enzyme family. MenD subfamily. As to quaternary structure, homodimer. Mg(2+) serves as cofactor. Mn(2+) is required as a cofactor. The cofactor is thiamine diphosphate.

The catalysed reaction is isochorismate + 2-oxoglutarate + H(+) = 5-enolpyruvoyl-6-hydroxy-2-succinyl-cyclohex-3-ene-1-carboxylate + CO2. It functions in the pathway quinol/quinone metabolism; 1,4-dihydroxy-2-naphthoate biosynthesis; 1,4-dihydroxy-2-naphthoate from chorismate: step 2/7. The protein operates within quinol/quinone metabolism; menaquinone biosynthesis. In terms of biological role, catalyzes the thiamine diphosphate-dependent decarboxylation of 2-oxoglutarate and the subsequent addition of the resulting succinic semialdehyde-thiamine pyrophosphate anion to isochorismate to yield 2-succinyl-5-enolpyruvyl-6-hydroxy-3-cyclohexene-1-carboxylate (SEPHCHC). The chain is 2-succinyl-5-enolpyruvyl-6-hydroxy-3-cyclohexene-1-carboxylate synthase from Serratia proteamaculans (strain 568).